A 2275-amino-acid chain; its full sequence is Serine-rich adhesin for platelets (2275 aa).

Residues 1–89 (MSKRQKEFHD…VNMLHDQQAF (89 aa)) form the signal peptide. The tract at residues 90 to 230 (AASDAPLTSE…KTSTTSTSTA (141 aa)) is serine-rich repeat region 1, SRR1. The segment covering 100 to 111 (LNTQSETVGNQN) has biased composition (polar residues). Disordered regions lie at residues 100–229 (LNTQ…STST) and 751–2247 (NSMS…GLLG). Positions 112 to 128 (STTIEASTSTADSTSVT) are enriched in low complexity. Polar residues predominate over residues 129–140 (KNSSSVQTSNSD). Residues 150–229 (VTSTTNSTSN…NKTSTTSTST (80 aa)) show a composition bias toward low complexity. The segment at 231–751 (PVKLRTFSRL…TTFKYEVTRN (521 aa)) is non-repeat region (NRR). Composition is skewed to low complexity over residues 752–1392 (SMSD…LSLS) and 1402–2218 (SNSA…ATSE). The serine-rich repeat region 2, SRR2 stretch occupies residues 752 to 2236 (SMSDSVSTSG…AQSEKRLPDT (1485 aa)). The LPXTG sorting signal motif lies at 2233–2237 (LPDTG). The residue at position 2236 (T2236) is a Pentaglycyl murein peptidoglycan amidated threonine. Positions 2237–2275 (GDSIKQNGLLGGVMTLLVGLGLMKRKKKKDENDQDDSQA) are cleaved as a propeptide — removed by sortase.

This sequence belongs to the serine-rich repeat protein (SRRP) family. Post-translationally, proteolytically cleaved by a metalloprotease. In terms of processing, glycosylated. It is probable that most of the Ser residues in SSR1 and SSR2 are O-GlcNAcylated. Sequential glycosylation by sugar transferases are able to generate complex sugar polymorphisms.

Its subcellular location is the secreted. It is found in the cell wall. Functionally, mediates binding to human platelets, possibly through a receptor-ligand interaction. Probably associated with virulence in endovascular infection. This Staphylococcus aureus (strain MSSA476) protein is Serine-rich adhesin for platelets (sraP).